The primary structure comprises 445 residues: Glycine--tRNA ligase (445 aa).

Residues arginine 97 and glutamate 145 each contribute to the substrate site. Residues arginine 177–glutamate 179, phenylalanine 187–phenylalanine 192, glutamate 262–valine 263, and glycine 308–arginine 311 each bind ATP. A substrate-binding site is contributed by phenylalanine 192 to glutamate 196. Residue glutamate 304 to glycine 308 coordinates substrate.

The protein belongs to the class-II aminoacyl-tRNA synthetase family. Homodimer.

It is found in the cytoplasm. It carries out the reaction tRNA(Gly) + glycine + ATP = glycyl-tRNA(Gly) + AMP + diphosphate. In terms of biological role, catalyzes the attachment of glycine to tRNA(Gly). The polypeptide is Glycine--tRNA ligase (Borreliella burgdorferi (strain ATCC 35210 / DSM 4680 / CIP 102532 / B31) (Borrelia burgdorferi)).